The chain runs to 223 residues: Voltage-dependent calcium channel gamma-1 subunit (223 aa).

Residues 1–10 (MSQTKTLKVR) are Cytoplasmic-facing. The chain crosses the membrane as a helical span at residues 11 to 29 (VALLCILVGIVLALVAVVT). Residues 30-109 (DHWAVLSPHV…TQKEYSISAA (80 aa)) lie on the Extracellular side of the membrane. 2 N-linked (GlcNAc...) asparagine glycosylation sites follow: N43 and N80. C57 and C81 form a disulfide bridge. The chain crosses the membrane as a helical span at residues 110–130 (AIAIFSLGFIIVGTLCALLSF). Residues 131-135 (RKKRD) lie on the Cytoplasmic side of the membrane. The helical transmembrane segment at 136-156 (YLLRPASMFYIFAGLCLSVSA) threads the bilayer. The Extracellular segment spans residues 157–180 (EVMRQSVQRMVDSEHTAWIAHSLA). A helical membrane pass occupies residues 181 to 205 (WSFICACVAAALLLVGGLALLLLAL). The Cytoplasmic portion of the chain corresponds to 206–223 (PRMPRDPWESCMDAEPEH).

It belongs to the PMP-22/EMP/MP20 family. CACNG subfamily. Component of a calcium channel complex consisting of a pore-forming alpha subunit (CACNA1S) and the ancillary subunits CACNB1 or CACNB2, CACNG1 and CACNA2D1. The channel complex contains alpha, beta, gamma and delta subunits in a 1:1:1:1 ratio, i.e. it contains either CACNB1 or CACNB2. Post-translationally, N-glycosylated.

The protein resides in the cell membrane. It is found in the sarcolemma. In terms of biological role, regulatory subunit of the voltage-gated calcium channel that gives rise to L-type calcium currents in skeletal muscle. Regulates channel inactivation kinetics. This Bos taurus (Bovine) protein is Voltage-dependent calcium channel gamma-1 subunit (CACNG1).